Reading from the N-terminus, the 213-residue chain is Small ribosomal subunit protein eS1 (213 aa).

This sequence belongs to the eukaryotic ribosomal protein eS1 family.

The sequence is that of Small ribosomal subunit protein eS1 from Desulfurococcus amylolyticus (strain DSM 18924 / JCM 16383 / VKM B-2413 / 1221n) (Desulfurococcus kamchatkensis).